A 301-amino-acid chain; its full sequence is MRIIFMGTPDFAVPTLEALVAAGHDVVAAYSQPPRPAGRGKKLQPSPVHLAAEAHGIDVRTPVSLKGADEQTTLAAFDADVAVVAAYGLILPQAVLDAPRLGCLNVHGSLLPRWRGAAPVQRAILAGDEMTGVTIMQMERGLDTGPMLARIETPVDGKTAGDLTAELAVKGAALMVQVLADLASYPAVVQPEQGVTYAHKIDKAESRLDFTRDAVDVERQVRAFSPAPGAFFELEGERYRVLAAEVLGVAGEPGVTVDDVLAIACGTGAIRPTLIQRAGRPAMDTASLLRGRAIPGGTRLG.

(6S)-5,6,7,8-tetrahydrofolate is bound at residue 109–112 (SLLP).

It belongs to the Fmt family.

It catalyses the reaction L-methionyl-tRNA(fMet) + (6R)-10-formyltetrahydrofolate = N-formyl-L-methionyl-tRNA(fMet) + (6S)-5,6,7,8-tetrahydrofolate + H(+). Attaches a formyl group to the free amino group of methionyl-tRNA(fMet). The formyl group appears to play a dual role in the initiator identity of N-formylmethionyl-tRNA by promoting its recognition by IF2 and preventing the misappropriation of this tRNA by the elongation apparatus. In Novosphingobium aromaticivorans (strain ATCC 700278 / DSM 12444 / CCUG 56034 / CIP 105152 / NBRC 16084 / F199), this protein is Methionyl-tRNA formyltransferase.